The sequence spans 2662 residues: Centrosome-associated protein CEP250L1 (2662 aa).

Coiled-coil stretches lie at residues 1030–1248 (KVHY…EEEE) and 1281–1719 (ARTH…IDAQ).

Its subcellular location is the cytoplasm. It is found in the cytoskeleton. The protein resides in the microtubule organizing center. It localises to the centrosome. Its function is as follows. Part of the centrosome inner core complex. Plays a role in the formation and/or stabilization of the mitotic spindle. Required for proper nuclear segregation and DNA partitioning during cell division. In Toxoplasma gondii (strain ATCC 50611 / Me49), this protein is Centrosome-associated protein CEP250L1.